Consider the following 313-residue polypeptide: Protoheme IX farnesyltransferase (313 aa).

Helical transmembrane passes span 34–54 (VIELLLVTTIPAMLLADRGTV), 56–76 (PLLIINTLVGGLLAAAGANTL), 105–125 (HALIFGLTLSVASFFWLWSTT), 128–148 (LSAHLAGATIAFYVLVYTLLL), 152–172 (TSQNVVWGGAAGCMPVMIGWS), 173–193 (AVTGTIQWPALVMFLIIFFWT), 237–257 (VLATLALALTTGWLYASVAIL), and 291–311 (YLAVVFVALAVDSALALPTLL).

The protein belongs to the UbiA prenyltransferase family. Protoheme IX farnesyltransferase subfamily.

It localises to the cell membrane. The catalysed reaction is heme b + (2E,6E)-farnesyl diphosphate + H2O = Fe(II)-heme o + diphosphate. It participates in porphyrin-containing compound metabolism; heme O biosynthesis; heme O from protoheme: step 1/1. In terms of biological role, converts heme B (protoheme IX) to heme O by substitution of the vinyl group on carbon 2 of heme B porphyrin ring with a hydroxyethyl farnesyl side group. This chain is Protoheme IX farnesyltransferase, found in Mycolicibacterium gilvum (strain PYR-GCK) (Mycobacterium gilvum (strain PYR-GCK)).